We begin with the raw amino-acid sequence, 338 residues long: tRNA dimethylallyltransferase (338 aa).

13 to 20 (GPTASGKT) serves as a coordination point for ATP. 15 to 20 (TASGKT) lines the substrate pocket. Interaction with substrate tRNA regions lie at residues 38–41 (DSTL) and 162–166 (QRVSR).

This sequence belongs to the IPP transferase family. Monomer. The cofactor is Mg(2+).

It carries out the reaction adenosine(37) in tRNA + dimethylallyl diphosphate = N(6)-dimethylallyladenosine(37) in tRNA + diphosphate. Its function is as follows. Catalyzes the transfer of a dimethylallyl group onto the adenine at position 37 in tRNAs that read codons beginning with uridine, leading to the formation of N6-(dimethylallyl)adenosine (i(6)A). The sequence is that of tRNA dimethylallyltransferase from Cellvibrio japonicus (strain Ueda107) (Pseudomonas fluorescens subsp. cellulosa).